The following is a 542-amino-acid chain: Chaperonin GroEL (542 aa).

ATP contacts are provided by residues 29–32 (TLGP), 86–90 (DGTTT), Gly-413, 476–478 (NAA), and Asp-492. The tract at residues 522-542 (PDENGPAAVPDMGMGGMGGMM) is disordered.

This sequence belongs to the chaperonin (HSP60) family. Forms a cylinder of 14 subunits composed of two heptameric rings stacked back-to-back. Interacts with the co-chaperonin GroES.

The protein localises to the cytoplasm. It carries out the reaction ATP + H2O + a folded polypeptide = ADP + phosphate + an unfolded polypeptide.. Together with its co-chaperonin GroES, plays an essential role in assisting protein folding. The GroEL-GroES system forms a nano-cage that allows encapsulation of the non-native substrate proteins and provides a physical environment optimized to promote and accelerate protein folding. The polypeptide is Chaperonin GroEL (Listeria monocytogenes serotype 4a (strain HCC23)).